Consider the following 251-residue polypeptide: Flap endonuclease Xni (251 aa).

D104 is a binding site for Mg(2+). The region spanning 160 to 249 (VLPRQLPDYW…IDGNLQQLRL (90 aa)) is the 5'-3' exonuclease domain. L171, A172, P180, V182, and I185 together coordinate K(+). The segment at 184 to 189 (GIGPKS) is interaction with DNA.

Belongs to the Xni family. Mg(2+) is required as a cofactor. Requires K(+) as cofactor.

Its function is as follows. Has flap endonuclease activity. During DNA replication, flap endonucleases cleave the 5'-overhanging flap structure that is generated by displacement synthesis when DNA polymerase encounters the 5'-end of a downstream Okazaki fragment. The polypeptide is Flap endonuclease Xni (Salmonella dublin (strain CT_02021853)).